Here is a 123-residue protein sequence, read N- to C-terminus: Large ribosomal subunit protein uL14 (123 aa).

This sequence belongs to the universal ribosomal protein uL14 family. In terms of assembly, part of the 50S ribosomal subunit. Forms a cluster with proteins L3 and L19. In the 70S ribosome, L14 and L19 interact and together make contacts with the 16S rRNA in bridges B5 and B8.

Its function is as follows. Binds to 23S rRNA. Forms part of two intersubunit bridges in the 70S ribosome. This Yersinia pestis bv. Antiqua (strain Antiqua) protein is Large ribosomal subunit protein uL14.